The primary structure comprises 456 residues: SWI/SNF complex component SNF12 homolog (456 aa).

The SWIB/MDM2 domain maps to 234 to 310; that stretch reads HVPQKYKVLG…PQLLREHLSP (77 aa). The interval 435 to 456 is disordered; that stretch reads KQTTPNPTPQQISMAPSTPQTP.

The protein belongs to the SMARCD family. Part of a SWI-SNF complex.

It localises to the nucleus. In terms of biological role, involved in transcriptional activation and repression of select genes by chromatin remodeling (alteration of DNA-nucleosome topology). This is SWI/SNF complex component SNF12 homolog (snf12-1) from Dictyostelium discoideum (Social amoeba).